The primary structure comprises 244 residues: MQTLLALNWKMNKTPTEARSWAEELTTKYAPAEGVDLAVLAPALDLSALAANLPAGIAFGGQDVSAHESGAYTGEISAAMLKDAGASCVVVGHSERREYHDESDAXVAAKARQAQANGLLPIVCVGENLDVRERGEHVPQTLAQLRGSLEGVGADVVVAYEPVWAIGTGKTATADDAEELAAAIRGALREQYGARAEGIRVLYGGSVKPENIAEICGKPNVNGALVGGASLKVPDVLGMLDALR.

Residue 8 to 10 coordinates substrate; that stretch reads NWK. Histidine 93 functions as the Electrophile in the catalytic mechanism. Glutamate 161 acts as the Proton acceptor in catalysis. Residues glycine 167, serine 206, and 227–228 contribute to the substrate site; that span reads GG.

This sequence belongs to the triosephosphate isomerase family. Homodimer.

It localises to the cytoplasm. The enzyme catalyses D-glyceraldehyde 3-phosphate = dihydroxyacetone phosphate. The protein operates within carbohydrate biosynthesis; gluconeogenesis. It functions in the pathway carbohydrate degradation; glycolysis; D-glyceraldehyde 3-phosphate from glycerone phosphate: step 1/1. In terms of biological role, involved in the gluconeogenesis. Catalyzes stereospecifically the conversion of dihydroxyacetone phosphate (DHAP) to D-glyceraldehyde-3-phosphate (G3P). The chain is Triosephosphate isomerase from Deinococcus radiodurans (strain ATCC 13939 / DSM 20539 / JCM 16871 / CCUG 27074 / LMG 4051 / NBRC 15346 / NCIMB 9279 / VKM B-1422 / R1).